A 341-amino-acid chain; its full sequence is Short chain dehydrogenase virL (341 aa).

Residues Leu49, Lys74, Asp97, Asn123, Tyr210, and Lys214 each coordinate NADP(+). The active-site Proton donor is Tyr210. The Lowers pKa of active site Tyr role is filled by Lys214.

Belongs to the short-chain dehydrogenases/reductases (SDR) family.

It participates in secondary metabolite biosynthesis. Short chain dehydrogenase; part of the gene cluster that mediates the biosynthesis of virensols and trichoxide, fungal natural products that contain or are derived from a salicylaldehyde core. The pathway begins with the synthesis of the reduced chain in virensol C by the highly reducing polyketide synthase virA via condensation of one acetate and 8 malonate units. VirA has interesting programming rules since the first 2 ketides are fully reduced, the 3 following ketides undergo beta-dehydration, and the last 3 ketides are only reduced to beta-hydroxys to yield the trihydroxy portion. The production of aldehyde virensol C by virA alone is surprising, since virA does not contain a reductase (R) domain that is typically associated with reductive product release in HRPKS. The cupin-domain enzyme virC is involved in enhancing virA product turnover. The short-chain dehydrogenase virB then oxidizes the C-7 alcohol of virensol C to a ketone, yielding virensol D. Virensol D is further transformed to salicylaldehyde 5-deoxyaurocitrin by the short-chain dehydrogenase virD. VirD catalyzes the dehydrogenation of C-3 to form the beta-ketone aldehyde, which is followed by the generation of the nucleophilic C-2 that is required for the intramolecular aldol condensation between C-2 and C-7, itself followed by dehydration and aromatization which leads to salicylaldehyde 5-deoxyaurocitrin. While the dehydrogenation of virensol D is definitely catalyzed by virD, the aldol condensation and dehydration may be uncatalyzed or assisted by virD. The short chain dehydrogenase virG then converts salicylaldehyde 5-deoxyaurocitrin into virensol B which is further hydroxylated by the cytochrome P450 monooxygenase virE to yield the hydroquinone virensol A. VirI then may oxidize virensol A to form the quinone, while virH performs the epoxidation. Finally, the two remaining short-chain dehydrogenases, virK and virL, are probably responsible for reducing the ketones to the corresponding alcohols to furnish the epoxycyclohexanol structure in trichoxide. The polypeptide is Short chain dehydrogenase virL (Hypocrea virens (strain Gv29-8 / FGSC 10586) (Gliocladium virens)).